A 156-amino-acid chain; its full sequence is Small ribosomal subunit protein uS7 (156 aa).

It belongs to the universal ribosomal protein uS7 family. In terms of assembly, part of the 30S ribosomal subunit. Contacts proteins S9 and S11.

In terms of biological role, one of the primary rRNA binding proteins, it binds directly to 16S rRNA where it nucleates assembly of the head domain of the 30S subunit. Is located at the subunit interface close to the decoding center, probably blocks exit of the E-site tRNA. The protein is Small ribosomal subunit protein uS7 of Synechococcus sp. (strain CC9605).